A 368-amino-acid chain; its full sequence is S-adenosylmethionine:tRNA ribosyltransferase-isomerase (368 aa).

The protein belongs to the QueA family. As to quaternary structure, monomer.

It localises to the cytoplasm. It carries out the reaction 7-aminomethyl-7-carbaguanosine(34) in tRNA + S-adenosyl-L-methionine = epoxyqueuosine(34) in tRNA + adenine + L-methionine + 2 H(+). Its pathway is tRNA modification; tRNA-queuosine biosynthesis. Its function is as follows. Transfers and isomerizes the ribose moiety from AdoMet to the 7-aminomethyl group of 7-deazaguanine (preQ1-tRNA) to give epoxyqueuosine (oQ-tRNA). The chain is S-adenosylmethionine:tRNA ribosyltransferase-isomerase from Methylorubrum extorquens (strain CM4 / NCIMB 13688) (Methylobacterium extorquens).